Consider the following 97-residue polypeptide: Mitochondrial import inner membrane translocase subunit Tim8 A (97 aa).

The short motif at 43–66 (CWEKCMDKPGPKLDSRAEACFVNC) is the Twin CX3C motif element. 2 cysteine pairs are disulfide-bonded: cysteine 43/cysteine 66 and cysteine 47/cysteine 62. Residues serine 57, serine 87, serine 94, and serine 96 each carry the phosphoserine modification.

It belongs to the small Tim family. In terms of assembly, heterohexamer; composed of 3 copies of TIMM8A and 3 copies of TIMM13, named soluble 70 kDa complex. Associates with the TIM22 complex, whose core is composed of TIMM22.

It is found in the mitochondrion inner membrane. In terms of biological role, mitochondrial intermembrane chaperone that participates in the import and insertion of some multi-pass transmembrane proteins into the mitochondrial inner membrane. Also required for the transfer of beta-barrel precursors from the TOM complex to the sorting and assembly machinery (SAM complex) of the outer membrane. Acts as a chaperone-like protein that protects the hydrophobic precursors from aggregation and guide them through the mitochondrial intermembrane space. The TIMM8-TIMM13 complex mediates the import of proteins such as TIMM23, SLC25A12/ARALAR1 and SLC25A13/ARALAR2, while the predominant TIMM9-TIMM10 70 kDa complex mediates the import of much more proteins. The chain is Mitochondrial import inner membrane translocase subunit Tim8 A (TIMM8A) from Bos taurus (Bovine).